A 473-amino-acid polypeptide reads, in one-letter code: GTPase Der (473 aa).

EngA-type G domains are found at residues proline 5 to glutamate 170 and leucine 178 to methionine 351. Residues glycine 11 to serine 18, aspartate 58 to isoleucine 62, asparagine 123 to aspartate 126, glycine 184 to serine 191, aspartate 231 to valine 235, and asparagine 296 to aspartate 299 each bind GTP. The KH-like domain maps to phenylalanine 352–glutamate 436. Over residues proline 438–leucine 454 the composition is skewed to polar residues. The segment at proline 438–arginine 473 is disordered. A compositionally biased stretch (basic and acidic residues) spans arginine 455–arginine 473.

It belongs to the TRAFAC class TrmE-Era-EngA-EngB-Septin-like GTPase superfamily. EngA (Der) GTPase family. Associates with the 50S ribosomal subunit.

Functionally, GTPase that plays an essential role in the late steps of ribosome biogenesis. The chain is GTPase Der from Psychrobacter arcticus (strain DSM 17307 / VKM B-2377 / 273-4).